We begin with the raw amino-acid sequence, 465 residues long: Phytase A (465 aa).

The signal sequence occupies residues methionine 1–glycine 26. Residues cysteine 30 and cysteine 39 are joined by a disulfide bond. Residues glutamine 49, tyrosine 50, arginine 80, histidine 81, arginine 84, and threonine 87 each contribute to the 1D-myo-inositol hexakisphosphate site. 4 cysteine pairs are disulfide-bonded: cysteine 70-cysteine 412, cysteine 213-cysteine 463, cysteine 262-cysteine 280, and cysteine 434-cysteine 442. Histidine 81 (nucleophile) is an active-site residue. A glycan (N-linked (GlcNAc...) asparagine) is linked at asparagine 104. 1D-myo-inositol hexakisphosphate is bound at residue arginine 164. Asparagine 205 carries N-linked (GlcNAc...) asparagine glycosylation. Residue aspartate 209 participates in 1D-myo-inositol hexakisphosphate binding. The N-linked (GlcNAc...) asparagine glycan is linked to asparagine 228. Lysine 299 is a binding site for 1D-myo-inositol hexakisphosphate. 2 N-linked (GlcNAc...) asparagine glycosylation sites follow: asparagine 337 and asparagine 350. Residues histidine 359 and aspartate 360 each contribute to the 1D-myo-inositol hexakisphosphate site. N-linked (GlcNAc...) asparagine glycosylation is present at asparagine 374.

It belongs to the histidine acid phosphatase family. Monomer.

It is found in the secreted. It catalyses the reaction 1D-myo-inositol hexakisphosphate + H2O = 1D-myo-inositol 1,2,4,5,6-pentakisphosphate + phosphate. The enzyme catalyses 1D-myo-inositol 1,2,4,5,6-pentakisphosphate + H2O = 1D-myo-inositol 1,2,5,6-tetrakisphosphate + phosphate. The catalysed reaction is 1D-myo-inositol 1,2,5,6-tetrakisphosphate + H2O = 1D-myo-inositol 1,2,6-trisphosphate + phosphate. It carries out the reaction 1D-myo-inositol 1,2,6-trisphosphate + H2O = 1D-myo-inositol 1,2-bisphosphate + phosphate. It catalyses the reaction 1D-myo-inositol 1,2-bisphosphate + H2O = 1D-myo-inositol 2-phosphate + phosphate. In terms of biological role, catalyzes the phosphate monoester hydrolysis of phytic acid (myo-inositol hexakisphosphate), which results in the stepwise formation of myo-inositol pentakis-, tetrakis-, tris-, bis-, and monophosphates, as well as the liberation of inorganic phosphate. Myo-inositol 2-monophosphate is the end product. Has a broad substrate specificity and is also able to dephosphorylate other classic acid phosphatase substrates such as p-nitrophenyl phosphate, phenyl phosphate, fructose 1,6-bisphosphate, fructose 6-phosphate, glucose 6-phosphate, ribose 5-phosphate, alpha-glycerophosphate, beta-glycerophosphate, 3-phosphoglycerate, phosphoenolpyruvate, as well as ADP and ATP. This is Phytase A (phyA) from Aspergillus fumigatus (strain ATCC MYA-4609 / CBS 101355 / FGSC A1100 / Af293) (Neosartorya fumigata).